The primary structure comprises 487 residues: MRLTPNYDYEVSSIDKKKRGYIVQIIGPVLDVPFSPGMXPSIYNALVVQGRHKQEPNVTCEVQQLLGNNRVRAVAMSDTDGLMRGMEVIDTGTPISVPVGGSTLGRIFNVLGEPVDQLGPVETNQLSPIHRSAPPFLKLDTRLSIFETGIKVVDLLAPYRRGGKVGLFGGAGVGKTVLIMELINNIAKAYGGVSVFGGVGERTREGNDLYMEMKESGVINQQKLAESKVALVYGQMNEPPGARMRVGLTALTMAEYFRDVNRQDVLLFIDNIFRFVQAGSEVSALLGRMPSAVGYQPTLSTEMGSLQERITSTKEGSITSIQAVYVPADDLTDPAPATTFAHLDATTVLSRSLAAKGIYPAVDPLDSTSMMLQPQIVGKQHYKTAQRVKQTLQRYKELQDIIAILGLDELSDDDRLTVARARKIERFLSQPFFVAEIFTGSPGKYVSLAETIRGCTLILSGEFDDLPEQAFYLVGTIDEVNAKAMLE.

Position 169-176 (169-176) interacts with ATP; the sequence is GGAGVGKT.

The protein belongs to the ATPase alpha/beta chains family. F-type ATPases have 2 components, CF(1) - the catalytic core - and CF(0) - the membrane proton channel. CF(1) has five subunits: alpha(3), beta(3), gamma(1), delta(1), epsilon(1). CF(0) has four main subunits: a(1), b(1), b'(1) and c(9-12).

It localises to the plastid membrane. It catalyses the reaction ATP + H2O + 4 H(+)(in) = ADP + phosphate + 5 H(+)(out). Its function is as follows. Produces ATP from ADP in the presence of a proton gradient across the membrane. The catalytic sites are hosted primarily by the beta subunits. The protein is ATP synthase subunit beta, plastid (atpB) of Cuscuta pentagona (Five-angled dodder).